We begin with the raw amino-acid sequence, 988 residues long: Protein argonaute 10 (988 aa).

Residues 1–11 (MPIRQMKDSSE) show a composition bias toward basic and acidic residues. The disordered stretch occupies residues 1-103 (MPIRQMKDSS…PPSQTTSSAV (103 aa)). Residues 41-57 (PVTVTTPATVTQSQASS) are compositionally biased toward low complexity. The span at 64-73 (NRSRRRNRGG) shows a compositional bias: basic residues. The region spanning 338–451 (PVIEFVAQLL…LPMEACKIVE (114 aa)) is the PAZ domain. One can recognise a Piwi domain in the interval 625 to 946 (LLLAILPDNN…AAFRARFYLE (322 aa)).

The protein belongs to the argonaute family. Ago subfamily. In terms of assembly, interacts with GATA18/HAN and KNAT1/BP. Interacts with RICE1 and RICE2 that act as cofactors. As to expression, expressed in roots, stems, leaves, developing embryo, siliques, inflorescences, provascular tissue, shoot apical meristem (SAM) and adaxial (upper) sides of lateral organ primordia. Observed in the floral meristem, the adaxial side of sepal primordia, and the provascular tissue.

The protein localises to the cytoplasm. In terms of biological role, involved in RNA-mediated post-transcriptional gene silencing (PTGS). Main component of the RNA-induced silencing complex (RISC) that binds to a short guide RNA such as a microRNA (miRNA) or small interfering RNA (siRNA). RISC uses the mature miRNA or siRNA as a guide for slicer-directed cleavage of homologous mRNAs to repress gene expression. Required for reliable formation of primary and axillary shoot apical meristems. Specifies leaf adaxial identity by repressing the miR165 and miR166 microRNAs in the embryonic shoot apex, in the shoot apical meristem (SAM) and leaf. Represses the microRNA miR398 which targets CCS1 chaperone mRNAs for translational inhibition. Acts as a negative regulator of AGO1 protein level. Like AGO1, is required for stem cell function and organ polarity. Unlike AGO1, is not subjected to small RNA-mediated repression itself. Essential for multiple processes in development. Coregulates, with GATA18/HAN, the shoot apical meristem (SAM) organization. The protein is Protein argonaute 10 of Arabidopsis thaliana (Mouse-ear cress).